Reading from the N-terminus, the 168-residue chain is uncharacterized protein (168 aa).

Residues 1–15 show a composition bias toward low complexity; it reads MKRIISSSKSLKQLS. A disordered region spans residues 1–107; that stretch reads MKRIISSSKS…NNNNNNNNNN (107 aa). A compositionally biased stretch (acidic residues) spans 33–47; the sequence is SDSDSDSDSDSDSDS. The span at 48–107 shows a compositional bias: low complexity; the sequence is DSNSNSNSNSNSNSNSNSNSNSNSNSNNNNNNTNNNNNNNNNNNNNNNNNNNNNNNNNNN.

This is an uncharacterized protein from Dictyostelium discoideum (Social amoeba).